Consider the following 404-residue polypeptide: MEPLDRELDEAELDLPSEPMLLNMGPSHPAMHGTVRIVLELSGETINKADVQIGYLHRGFEKMCERGTWSQVFPYVDRLNYVSPMLNNVGFALAVEKMLGVTVPERCQYYRVILGELARICDHMICSGAMSMELGAFTPFLYLCRAREIFWEIFEEETGARLTHSFGRVGGMARPPTADFKAMVRVGLARVLALVNDAEKLILKNRIFLDRLDGVGQISQEDALALGWTGVVLRATGVPYDVRRANPYMVYDRFEFDVPVGTRGDNYDRFMCRQEEIRQAGRIIEQALEQMPDEGPINIDDPRIVLPPKEEVYTTIEATIQHFKIVMEGIKVPAGECYSYTEAGNGELGFYLVSDGSGTPYRVRIRPPCFATTQGLSQLITGLMIPDVVPTFGSLNMIGGECDH.

It belongs to the complex I 49 kDa subunit family. As to quaternary structure, NDH-1 is composed of 14 different subunits. Subunits NuoB, C, D, E, F, and G constitute the peripheral sector of the complex.

Its subcellular location is the cell inner membrane. It catalyses the reaction a quinone + NADH + 5 H(+)(in) = a quinol + NAD(+) + 4 H(+)(out). Functionally, NDH-1 shuttles electrons from NADH, via FMN and iron-sulfur (Fe-S) centers, to quinones in the respiratory chain. The immediate electron acceptor for the enzyme in this species is believed to be ubiquinone. Couples the redox reaction to proton translocation (for every two electrons transferred, four hydrogen ions are translocated across the cytoplasmic membrane), and thus conserves the redox energy in a proton gradient. This Sorangium cellulosum (strain So ce56) (Polyangium cellulosum (strain So ce56)) protein is NADH-quinone oxidoreductase subunit D 1.